Reading from the N-terminus, the 115-residue chain is MAAFGLPNFGQLTEAFKKAQQIQQDAQKLQEELDAMELEGKNQDGRVSICLSGNQLPLRIEIDPSILLEGKEKAEIAILEALKDAHELSTSTMKERMQELTGGLNLNLPGIDDGD.

The protein belongs to the YbaB/EbfC family. As to quaternary structure, homodimer.

It is found in the cytoplasm. Its subcellular location is the nucleoid. In terms of biological role, binds to DNA and alters its conformation. May be involved in regulation of gene expression, nucleoid organization and DNA protection. This chain is Nucleoid-associated protein P9211_00201, found in Prochlorococcus marinus (strain MIT 9211).